The chain runs to 57 residues: Andropin (57 aa).

The first 23 residues, 1–23 (MKYFVVLVVLALILAITVDPSDA), serve as a signal peptide directing secretion.

Belongs to the andropin family. Ejaculatory duct of adult males.

The protein resides in the secreted. Its function is as follows. Male-specific peptide with moderate activity against Gram-positive bacteria. The sequence is that of Andropin (Anp) from Drosophila sechellia (Fruit fly).